The chain runs to 547 residues: Chaperonin GroEL (547 aa).

Residues 30 to 33 (TLGP), K51, 87 to 91 (DGTTT), G415, 479 to 481 (NAA), and D495 contribute to the ATP site.

This sequence belongs to the chaperonin (HSP60) family. As to quaternary structure, forms a cylinder of 14 subunits composed of two heptameric rings stacked back-to-back. Interacts with the co-chaperonin GroES.

Its subcellular location is the cytoplasm. The catalysed reaction is ATP + H2O + a folded polypeptide = ADP + phosphate + an unfolded polypeptide.. Functionally, together with its co-chaperonin GroES, plays an essential role in assisting protein folding. The GroEL-GroES system forms a nano-cage that allows encapsulation of the non-native substrate proteins and provides a physical environment optimized to promote and accelerate protein folding. The polypeptide is Chaperonin GroEL (Polynucleobacter necessarius subsp. necessarius (strain STIR1)).